The following is a 128-amino-acid chain: Large ribosomal subunit protein mL51 (128 aa).

A mitochondrion-targeting transit peptide spans 1 to 31; it reads MAGSVPWAASRRLWGWVPSACRSFSLGVPRL.

Belongs to the mitochondrion-specific ribosomal protein mL51 family. Component of the mitochondrial ribosome large subunit (39S) which comprises a 16S rRNA and about 50 distinct proteins. Interacts with OXA1L.

It localises to the mitochondrion. In Mus musculus (Mouse), this protein is Large ribosomal subunit protein mL51 (Mrpl51).